The sequence spans 605 residues: Granule-bound starch synthase 1, chloroplastic/amyloplastic (605 aa).

The N-terminal 72 residues, Met-1 to Cys-72, are a transit peptide targeting the chloroplast. Lys-91 lines the ADP-alpha-D-glucose pocket.

Belongs to the glycosyltransferase 1 family. Bacterial/plant glycogen synthase subfamily.

It is found in the plastid. It localises to the chloroplast. The protein localises to the amyloplast. It catalyses the reaction an NDP-alpha-D-glucose + [(1-&gt;4)-alpha-D-glucosyl](n) = [(1-&gt;4)-alpha-D-glucosyl](n+1) + a ribonucleoside 5'-diphosphate + H(+). The protein operates within glycan biosynthesis; starch biosynthesis. Required for the synthesis of amylose in endosperm. The sequence is that of Granule-bound starch synthase 1, chloroplastic/amyloplastic (WAXY) from Zea mays (Maize).